A 510-amino-acid polypeptide reads, in one-letter code: MLILLGLLCLYTGLYVARTYWRLRHFPGPLVARFTDLGRLWWVKTSRSHHHHMGLHSRYGQYVRLGPNMISISDPDAIPLVYPIRPGVPKSDFYRSMMPYTRKGRSLPLVFNTRDEDLHKRLKTPIAHLYSLSNILTFEAFVDQVLEILFRQFEERFVPDQAPFNLGNWLQYFAFDVMGTMSFSRRYGFLEKGRDDTGLLSAIWAFMKAAAPVTQMPWVDLVWNKNPFIALFRATPAQPILNVVLSRINDRRNELYSTTSTPEKVNERDFLSRFMHIQSNSDTIPPWAVTAWSFSNVIAGSDTTAVAMKTLWYNLLLHPATMHRLRKELVQAQQQSKLSHPFPAWNEISGLPYLNACVNEALRIHPPFCLPFERIVPAEGMTIGDHFFPGGTVIGMNPWVINRHRPTFGEDADAWRPERWLEDPARTRQMENTLLSFGAGRRVCLGKNIALLELKKLTSALVLHYELEIVNPEKFQSQNFFFFKQEGLYAAVKRRSAGSPELYPDDAVPH.

An N-terminal signal peptide occupies residues 1–17 (MLILLGLLCLYTGLYVA). Cysteine 444 is a binding site for heme.

It belongs to the cytochrome P450 family. Requires heme as cofactor.

It functions in the pathway secondary metabolite biosynthesis. Its function is as follows. Cytochrome P450 monooxygenase; part of the gene cluster 41 that mediates the biosynthesis of an extracellular and diffusible metabolite that is able to stimulate colony sclerotial production. This Aspergillus flavus (strain ATCC 200026 / FGSC A1120 / IAM 13836 / NRRL 3357 / JCM 12722 / SRRC 167) protein is Cytochrome P450 monooxygenase AFLA_114810.